The primary structure comprises 20 residues: Alpha-conotoxin-like ts14a (20 aa).

Disulfide bonds link cysteine 3–cysteine 16 and cysteine 14–cysteine 20.

In terms of tissue distribution, expressed by the venom duct.

The protein resides in the secreted. Alpha-conotoxins act on postsynaptic membranes, they bind to the nicotinic acetylcholine receptors (nAChR) and thus inhibit them. The chain is Alpha-conotoxin-like ts14a from Conus tessulatus (Tessellate cone).